A 352-amino-acid chain; its full sequence is Photosystem II D2 protein (352 aa).

Residues 40–60 traverse the membrane as a helical segment; it reads CAYLAVGAWFTGTTFVTSWYT. H117 is a chlorophyll a binding site. Residues 124–140 form a helical membrane-spanning segment; it reads GFTLRQFEIARLIGLRP. The pheophytin a site is built by Q129 and N142. Residues 152–165 traverse the membrane as a helical segment; the sequence is VFVSVFLLYPLGQA. H197 contacts chlorophyll a. A helical membrane pass occupies residues 207 to 227; it reads AALLCAIHGATVENTLFEDGD. The a plastoquinone site is built by H214 and F261. H214 is a Fe cation binding site. H268 lines the Fe cation pocket. Residues 278-294 traverse the membrane as a helical segment; sequence GLWMSAIGVVGLGVNLR.

Belongs to the reaction center PufL/M/PsbA/D family. As to quaternary structure, PSII is composed of 1 copy each of membrane proteins PsbA, PsbB, PsbC, PsbD, PsbE, PsbF, PsbH, PsbI, PsbJ, PsbK, PsbL, PsbM, PsbT, PsbX, PsbY, PsbZ, Psb30/Ycf12, at least 3 peripheral proteins of the oxygen-evolving complex and a large number of cofactors. It forms dimeric complexes. It depends on The D1/D2 heterodimer binds P680, chlorophylls that are the primary electron donor of PSII, and subsequent electron acceptors. It shares a non-heme iron and each subunit binds pheophytin, quinone, additional chlorophylls, carotenoids and lipids. There is also a Cl(-1) ion associated with D1 and D2, which is required for oxygen evolution. The PSII complex binds additional chlorophylls, carotenoids and specific lipids. as a cofactor.

Its subcellular location is the plastid. The protein localises to the cyanelle thylakoid membrane. It carries out the reaction 2 a plastoquinone + 4 hnu + 2 H2O = 2 a plastoquinol + O2. Functionally, photosystem II (PSII) is a light-driven water:plastoquinone oxidoreductase that uses light energy to abstract electrons from H(2)O, generating O(2) and a proton gradient subsequently used for ATP formation. It consists of a core antenna complex that captures photons, and an electron transfer chain that converts photonic excitation into a charge separation. The D1/D2 (PsbA/PsbD) reaction center heterodimer binds P680, the primary electron donor of PSII as well as several subsequent electron acceptors. D2 is needed for assembly of a stable PSII complex. The protein is Photosystem II D2 protein of Cyanophora paradoxa.